Consider the following 151-residue polypeptide: Small ribosomal subunit protein uS9 (151 aa).

Residues 1–19 show a composition bias toward low complexity; it reads MTETTPAPQTPAAPAGPAQ. 2 disordered regions span residues 1-20 and 121-151; these read MTET…PAQS and KAGF…YSKR. A compositionally biased stretch (basic and acidic residues) spans 127–136; that stretch reads RDPRATERKK. Residues 137-151 are compositionally biased toward basic residues; the sequence is YGLKKARKAPQYSKR.

It belongs to the universal ribosomal protein uS9 family.

The polypeptide is Small ribosomal subunit protein uS9 (rpsI) (Mycobacterium bovis (strain ATCC BAA-935 / AF2122/97)).